The sequence spans 488 residues: Probable 26S proteasome non-ATPase regulatory subunit 3 (488 aa).

The tract at residues 1 to 20 (MTQDVEMKEQAAPPSNSLSS) is disordered. In terms of domain architecture, PCI spans 240 to 421 (SRYLFYLGKI…GWMVSKETGD (182 aa)). A disordered region spans residues 452–488 (FPPNSHKEKESAEKRRERQQQEQELAKHIAEEDDDDF). Over residues 456 to 481 (SHKEKESAEKRRERQQQEQELAKHIA) the composition is skewed to basic and acidic residues.

Belongs to the proteasome subunit S3 family. The 26S proteasome is composed of a core protease, known as the 20S proteasome, capped at one or both ends by the 19S regulatory complex (RC). The RC is composed of at least 18 different subunits in two subcomplexes, the base and the lid, which form the portions proximal and distal to the 20S proteolytic core, respectively.

The protein localises to the nucleus. Acts as a regulatory subunit of the 26 proteasome which is involved in the ATP-dependent degradation of ubiquitinated proteins. The chain is Probable 26S proteasome non-ATPase regulatory subunit 3 (21D7) from Nicotiana tabacum (Common tobacco).